The primary structure comprises 292 residues: AT-hook motif nuclear-localized protein 23 (292 aa).

The tract at residues 23–100 (HLHHNSSSDD…SKNKPKPPVI (78 aa)) is disordered. Over residues 60–79 (SGGGSGSSGGGGGHGGGGDV) the composition is skewed to gly residues. Positions 82-94 (RRPRGRPPGSKNK) form a DNA-binding region, a.T hook. The PPC domain occupies 106 to 242 (ANTLRAHILE…EDEQQQQLGG (137 aa)).

The protein resides in the nucleus. In terms of biological role, transcription factor that specifically binds AT-rich DNA sequences related to the nuclear matrix attachment regions (MARs). The polypeptide is AT-hook motif nuclear-localized protein 23 (Arabidopsis thaliana (Mouse-ear cress)).